The primary structure comprises 588 residues: Cryptochrome-1 (588 aa).

One can recognise a Photolyase/cryptochrome alpha/beta domain in the interval 3 to 132; sequence VNAVHWFRKG…EVIVRISHTL (130 aa). A Glycyl lysine isopeptide (Lys-Gly) (interchain with G-Cter in ubiquitin) cross-link involves residue K11. The LIR 1 signature appears at 50–54; the sequence is NRWRF. S71 is modified (phosphoserine; by AMPK). The short motif at 82–87 is the LIR 2 element; the sequence is DVFPRL. K107 participates in a covalent cross-link: Glycyl lysine isopeptide (Lys-Gly) (interchain with G-Cter in ubiquitin). An LIR 3 motif is present at residues 151 to 156; the sequence is KRFQTL. K159 is covalently cross-linked (Glycyl lysine isopeptide (Lys-Gly) (interchain with G-Cter in ubiquitin)). S247 is modified (phosphoserine; by MAPK). S252 provides a ligand contact to FAD. 2 short sequence motifs (LIR) span residues 255–260 and 271–276; these read LRFGCL and DLYKKV. At S280 the chain carries Phosphoserine; by AMPK. An LIR 6 motif is present at residues 285–290; that stretch reads SLYGQL. Q289 is an FAD binding site. Residue K329 forms a Glycyl lysine isopeptide (Lys-Gly) (interchain with G-Cter in ubiquitin) linkage. The short motif at 335–339 is the LIR 7 element; it reads TGFPW. H355 serves as a coordination point for FAD. A required for inhibition of CLOCK-BMAL1-mediated transcription region spans residues 371 to 470; that stretch reads WISWEEGMKV…LIGVNYPKPM (100 aa). The LIR 8 signature appears at 379–384; the sequence is KVFEEL. 387-389 lines the FAD pocket; sequence DAD. 3 consecutive short sequence motifs (LIR) follow at residues 395–400, 411–416, and 430–435; these read GSWMWL, HCYCPV, and RRYLPV. The segment at 471–493 is interaction with TIMELESS; it reads VNHAEASRLNIERMKQIYQQLSR. Residue K485 forms a Glycyl lysine isopeptide (Lys-Gly) (interchain with G-Cter in ubiquitin) linkage. Short sequence motifs (LIR) lie at residues 486-491 and 492-497; these read QIYQQL and SRYRGL. The segment at 511–588 is disordered; that stretch reads GGLMGYAPGE…GPKVQRQSSN (78 aa). Positions 545–568 are enriched in polar residues; sequence DSQQTNPLKQGRSSMGTGLSSGKR. A Glycyl lysine isopeptide (Lys-Gly) (interchain with G-Cter in ubiquitin) cross-link involves residue K567. S570 carries the post-translational modification Phosphoserine.

It belongs to the DNA photolyase class-1 family. As to quaternary structure, component of the circadian core oscillator, which includes the CRY proteins, CLOCK or NPAS2, BMAL1 or BMAL2, CSNK1D and/or CSNK1E, TIMELESS, and the PER proteins. Interacts directly with TIMELESS. Interacts directly with PER1, PER2 and PER3; interaction with PER2 inhibits its ubiquitination and vice versa. Interacts with FBXL21. Interacts with FBXL3. Interacts with CLOCK-BMAL1 independently of PER2 and DNA. Interacts with HDAC1, HDAC2 and SIN3B. Interacts with nuclear receptors AR, NR1D1, NR3C1/GR, RORA and RORC; the interaction with at least NR3C1/GR is ligand dependent. Interacts with PRKDC. Interacts with the G protein subunit alpha GNAS; the interaction may block GPCR-mediated regulation of cAMP concentrations. Interacts with PRMT5. Interacts with EZH2. Interacts with MYBBP1A, DOCK7, HNRNPU, RPL7A, RPL8 and RPS3. Interacts with PPP5C (via TPR repeats). Interacts with MAP1LC3B. Interacts with CLOCK. Interacts with BMAL1. Interacts weakly with HDAC3; this interaction is enhanced in the presence of FBXL3. Interacts with TRIM28, KCTD5 and DDB1. Interacts with FOXO1. Interacts with DTL and DDB1-CUL4A complex. Interacts with HNF4A. Interacts with PSMD2 in a KDM8-dependent manner. Interacts with KDM8 in a FBXL3-dependent manner. Interacts with PPARG in a ligand-dependent manner. Interacts with PPARD (via domain NR LBD) and NR1I2 (via domain NR LBD) in a ligand-dependent manner. Interacts with PPARA, NR1I3 and VDR. FAD serves as cofactor. It depends on (6R)-5,10-methylene-5,6,7,8-tetrahydrofolate as a cofactor. Phosphorylation on Ser-247 by MAPK is important for the inhibition of CLOCK-BMAL1-mediated transcriptional activity. Phosphorylation by CSNK1E requires interaction with PER1 or PER2. Phosphorylation at Ser-71 and Ser-280 by AMPK decreases protein stability. Phosphorylation at Ser-570 exhibits a robust circadian rhythm with a peak at CT8, increases protein stability, prevents SCF(FBXL3)-mediated degradation and is antagonized by interaction with PRKDC. In terms of processing, ubiquitinated by the SCF(FBXL3) and SCF(FBXL21) complexes, regulating the balance between degradation and stabilization. The SCF(FBXL3) complex is mainly nuclear and mediates ubiquitination and subsequent degradation of CRY1. In contrast, cytoplasmic SCF(FBXL21) complex-mediated ubiquitination leads to stabilize CRY1 and counteract the activity of the SCF(FBXL3) complex. The SCF(FBXL3) and SCF(FBXL21) complexes probably mediate ubiquitination at different Lys residues. Ubiquitination at Lys-11 and Lys-107 are specifically ubiquitinated by the SCF(FBXL21) complex but not by the SCF(FBXL3) complex. Ubiquitination may be inhibited by PER2. Deubiquitinated by USP7. Post-translationally, undergoes autophagy-mediated degradation in the liver in a time-dependent manner. Autophagic degradation of CRY1 (an inhibitor of gluconeogenesis) occurs during periods of reduced feeding allowing induction of gluconeogenesis and maintenance of blood glucose levels.

The protein resides in the cytoplasm. It localises to the nucleus. Its function is as follows. Transcriptional repressor which forms a core component of the circadian clock. The circadian clock, an internal time-keeping system, regulates various physiological processes through the generation of approximately 24 hour circadian rhythms in gene expression, which are translated into rhythms in metabolism and behavior. It is derived from the Latin roots 'circa' (about) and 'diem' (day) and acts as an important regulator of a wide array of physiological functions including metabolism, sleep, body temperature, blood pressure, endocrine, immune, cardiovascular, and renal function. Consists of two major components: the central clock, residing in the suprachiasmatic nucleus (SCN) of the brain, and the peripheral clocks that are present in nearly every tissue and organ system. Both the central and peripheral clocks can be reset by environmental cues, also known as Zeitgebers (German for 'timegivers'). The predominant Zeitgeber for the central clock is light, which is sensed by retina and signals directly to the SCN. The central clock entrains the peripheral clocks through neuronal and hormonal signals, body temperature and feeding-related cues, aligning all clocks with the external light/dark cycle. Circadian rhythms allow an organism to achieve temporal homeostasis with its environment at the molecular level by regulating gene expression to create a peak of protein expression once every 24 hours to control when a particular physiological process is most active with respect to the solar day. Transcription and translation of core clock components (CLOCK, NPAS2, BMAL1, BMAL2, PER1, PER2, PER3, CRY1 and CRY2) plays a critical role in rhythm generation, whereas delays imposed by post-translational modifications (PTMs) are important for determining the period (tau) of the rhythms (tau refers to the period of a rhythm and is the length, in time, of one complete cycle). A diurnal rhythm is synchronized with the day/night cycle, while the ultradian and infradian rhythms have a period shorter and longer than 24 hours, respectively. Disruptions in the circadian rhythms contribute to the pathology of cardiovascular diseases, cancer, metabolic syndromes and aging. A transcription/translation feedback loop (TTFL) forms the core of the molecular circadian clock mechanism. Transcription factors, CLOCK or NPAS2 and BMAL1 or BMAL2, form the positive limb of the feedback loop, act in the form of a heterodimer and activate the transcription of core clock genes and clock-controlled genes (involved in key metabolic processes), harboring E-box elements (5'-CACGTG-3') within their promoters. The core clock genes: PER1/2/3 and CRY1/2 which are transcriptional repressors form the negative limb of the feedback loop and interact with the CLOCK|NPAS2-BMAL1|BMAL2 heterodimer inhibiting its activity and thereby negatively regulating their own expression. This heterodimer also activates nuclear receptors NR1D1/2 and RORA/B/G, which form a second feedback loop and which activate and repress BMAL1 transcription, respectively. CRY1 and CRY2 have redundant functions but also differential and selective contributions at least in defining the pace of the SCN circadian clock and its circadian transcriptional outputs. More potent transcriptional repressor in cerebellum and liver than CRY2, though more effective in lengthening the period of the SCN oscillator. On its side, CRY2 seems to play a critical role in tuning SCN circadian period by opposing the action of CRY1. With CRY2, is dispensable for circadian rhythm generation but necessary for the development of intercellular networks for rhythm synchrony. Capable of translocating circadian clock core proteins such as PER proteins to the nucleus. Interacts with CLOCK-BMAL1 independently of PER proteins and is found at CLOCK-BMAL1-bound sites, suggesting that CRY may act as a molecular gatekeeper to maintain CLOCK-BMAL1 in a poised and repressed state until the proper time for transcriptional activation. Represses the CLOCK-BMAL1 induced transcription of BHLHE40/DEC1, ATF4, MTA1, KLF10 and NAMPT. May repress circadian target genes expression in collaboration with HDAC1 and HDAC2 through histone deacetylation. Mediates the clock-control activation of ATR and modulates ATR-mediated DNA damage checkpoint. In liver, mediates circadian regulation of cAMP signaling and gluconeogenesis by binding to membrane-coupled G proteins and blocking glucagon-mediated increases in intracellular cAMP concentrations and CREB1 phosphorylation. Inhibits hepatic gluconeogenesis by decreasing nuclear FOXO1 levels that down-regulates gluconeogenic gene expression. Besides its role in the maintenance of the circadian clock, is also involved in the regulation of other processes. Represses glucocorticoid receptor NR3C1/GR-induced transcriptional activity by binding to glucocorticoid response elements (GREs). Plays a key role in glucose and lipid metabolism modulation, in part, through the transcriptional regulation of genes involved in these pathways, such as LEP or ACSL4. Represses PPARD and its target genes in the skeletal muscle and limits exercise capacity. Plays an essential role in the generation of circadian rhythms in the retina. Represses the transcriptional activity of NR1I2. The chain is Cryptochrome-1 (Cry1) from Rattus norvegicus (Rat).